The following is a 266-amino-acid chain: Thymidylate synthase (266 aa).

Residue R24 coordinates dUMP. (6R)-5,10-methylene-5,6,7,8-tetrahydrofolate is bound at residue H54. Residue 129-130 (RR) participates in dUMP binding. The Nucleophile role is filled by C149. Residues 169-172 (RSAD), N180, and 210-212 (HIY) contribute to the dUMP site. D172 contributes to the (6R)-5,10-methylene-5,6,7,8-tetrahydrofolate binding site. A265 is a binding site for (6R)-5,10-methylene-5,6,7,8-tetrahydrofolate.

It belongs to the thymidylate synthase family. Bacterial-type ThyA subfamily. As to quaternary structure, homodimer.

The protein resides in the cytoplasm. The catalysed reaction is dUMP + (6R)-5,10-methylene-5,6,7,8-tetrahydrofolate = 7,8-dihydrofolate + dTMP. It participates in pyrimidine metabolism; dTTP biosynthesis. Functionally, catalyzes the reductive methylation of 2'-deoxyuridine-5'-monophosphate (dUMP) to 2'-deoxythymidine-5'-monophosphate (dTMP) while utilizing 5,10-methylenetetrahydrofolate (mTHF) as the methyl donor and reductant in the reaction, yielding dihydrofolate (DHF) as a by-product. This enzymatic reaction provides an intracellular de novo source of dTMP, an essential precursor for DNA biosynthesis. The sequence is that of Thymidylate synthase from Mycolicibacterium smegmatis (strain ATCC 700084 / mc(2)155) (Mycobacterium smegmatis).